We begin with the raw amino-acid sequence, 103 residues long: Thioredoxin-1 (103 aa).

A Thioredoxin domain is found at valine 2–alanine 103. Catalysis depends on nucleophile residues cysteine 30 and cysteine 33. A disulfide bridge links cysteine 30 with cysteine 33. Glycyl lysine isopeptide (Lys-Gly) (interchain with G-Cter in ubiquitin) cross-links involve residues lysine 54, lysine 66, and lysine 96.

Belongs to the thioredoxin family. As to quaternary structure, monomer. Part of the heterodimeric LMA1 complex together with the proteinase inhibitor PBI2. Most of the thioredoxin of yeast is in this complex rather than the well-studied monomer. LMA1 binds to the ATPase SEC18. Post-translationally, reversible disulfide bond formation between Cys-30 and Cys-33, reverted by thioredoxin reductase TRR1 using NADPH as hydrogen donor.

Its subcellular location is the nucleus. The protein localises to the cytoplasm. It is found in the golgi apparatus membrane. It localises to the mitochondrion intermembrane space. Its function is as follows. Participates as a hydrogen donor in redox reactions through the reversible oxidation of its active center dithiol to a disulfide, accompanied by the transfer of 2 electrons and 2 protons. It is involved in many cellular processes, including deoxyribonucleotide synthesis, repair of oxidatively damaged proteins, protein folding, sulfur metabolism, and redox homeostasis. Thioredoxin-dependent enzymes include phosphoadenosine-phosphosulfate reductase MET16, alkyl-hydroperoxide reductase DOT5, thioredoxin peroxidases TSA1 and TSA2, alkyl hydroperoxide reductase AHP1, and peroxiredoxin HYR1. Thioredoxin is also involved in protection against reducing stress. As part of the LMA1 complex, it is involved in the facilitation of vesicle fusion such as homotypic vacuole and ER-derived COPII vesicle fusion with the Golgi. This activity does not require the redox mechanism. This is Thioredoxin-1 (TRX1) from Saccharomyces cerevisiae (strain ATCC 204508 / S288c) (Baker's yeast).